The primary structure comprises 223 residues: Voltage-dependent calcium channel gamma-1 subunit (223 aa).

Residues 1-10 (MSQTKTAKVR) lie on the Cytoplasmic side of the membrane. A helical transmembrane segment spans residues 11 to 29 (VTLFFILVGGVLAMVAVVT). The Extracellular segment spans residues 30–109 (DHWAVLSPHL…TQKEYSISAA (80 aa)). N-linked (GlcNAc...) asparagine glycans are attached at residues asparagine 43 and asparagine 80. A disulfide bridge connects residues cysteine 57 and cysteine 81. The helical transmembrane segment at 110–130 (AIAIFSLGFIIVGSICAFLSF) threads the bilayer. The Cytoplasmic segment spans residues 131-135 (GNKRD). A helical transmembrane segment spans residues 136–156 (YLLRPASMFYAFAGLCLIVSV). Topologically, residues 157 to 180 (EVMRQSVKRMIDSEDTVWIEHYYS) are extracellular. The helical transmembrane segment at 181 to 205 (WSFACACAAFILLFLGGLFLLLFSL) threads the bilayer. Over 206–223 (PRMPQNPWESCMDAEPEH) the chain is Cytoplasmic.

This sequence belongs to the PMP-22/EMP/MP20 family. CACNG subfamily. In terms of assembly, component of a calcium channel complex consisting of a pore-forming alpha subunit (CACNA1S) and the ancillary subunits CACNB1 or CACNB2, CACNG1 and CACNA2D1. The channel complex contains alpha, beta, gamma and delta subunits in a 1:1:1:1 ratio, i.e. it contains either CACNB1 or CACNB2. N-glycosylated. As to expression, detected in skeletal muscle (at protein level).

Its subcellular location is the cell membrane. The protein localises to the sarcolemma. Its function is as follows. Regulatory subunit of the voltage-gated calcium channel that gives rise to L-type calcium currents in skeletal muscle. Regulates channel inactivation kinetics. This chain is Voltage-dependent calcium channel gamma-1 subunit (Cacng1), found in Mus musculus (Mouse).